The primary structure comprises 256 residues: Small ribosomal subunit protein uS2 (256 aa).

This sequence belongs to the universal ribosomal protein uS2 family.

This Brucella anthropi (strain ATCC 49188 / DSM 6882 / CCUG 24695 / JCM 21032 / LMG 3331 / NBRC 15819 / NCTC 12168 / Alc 37) (Ochrobactrum anthropi) protein is Small ribosomal subunit protein uS2.